Here is a 167-residue protein sequence, read N- to C-terminus: Ribosome maturation factor RimP (167 aa).

The protein belongs to the RimP family.

It is found in the cytoplasm. Functionally, required for maturation of 30S ribosomal subunits. This chain is Ribosome maturation factor RimP, found in Streptomyces griseus subsp. griseus (strain JCM 4626 / CBS 651.72 / NBRC 13350 / KCC S-0626 / ISP 5235).